Reading from the N-terminus, the 704-residue chain is Polyribonucleotide nucleotidyltransferase (704 aa).

The Mg(2+) site is built by Asp487 and Asp493. The KH domain occupies 554–613 (PRLLTIKIHPDKIREVIGKGGSTIQAITKETGTQIDIQDDGTIIIASVNAIAAQAAKSRI). Residues 623–691 (GRIYEGKVAK…KQGRIRLSIK (69 aa)) form the S1 motif domain.

It belongs to the polyribonucleotide nucleotidyltransferase family. Component of the RNA degradosome, which is a multiprotein complex involved in RNA processing and mRNA degradation. It depends on Mg(2+) as a cofactor.

It is found in the cytoplasm. It catalyses the reaction RNA(n+1) + phosphate = RNA(n) + a ribonucleoside 5'-diphosphate. Involved in mRNA degradation. Catalyzes the phosphorolysis of single-stranded polyribonucleotides processively in the 3'- to 5'-direction. The sequence is that of Polyribonucleotide nucleotidyltransferase from Xanthomonas oryzae pv. oryzae (strain MAFF 311018).